Here is a 163-residue protein sequence, read N- to C-terminus: Ureidoglycolate lyase 2 (163 aa).

This sequence belongs to the ureidoglycolate lyase family. In terms of assembly, homodimer. Ni(2+) serves as cofactor.

It catalyses the reaction (S)-ureidoglycolate = urea + glyoxylate. Its pathway is nitrogen metabolism; (S)-allantoin degradation. In terms of biological role, catalyzes the catabolism of the allantoin degradation intermediate (S)-ureidoglycolate, generating urea and glyoxylate. Involved in the utilization of allantoin as nitrogen source. This chain is Ureidoglycolate lyase 2, found in Rhizobium meliloti (strain 1021) (Ensifer meliloti).